A 484-amino-acid chain; its full sequence is PTS system MurNAc-GlcNAc-specific EIIBC component (484 aa).

Positions 5–87 constitute a PTS EIIB type-1 domain; the sequence is QQLAERIIAA…AELSGVKLGD (83 aa). C27 acts as the Phosphocysteine intermediate; for EIIB activity in catalysis. In terms of domain architecture, PTS EIIC type-1 spans 130–484; sequence KSIANIFIPL…AMRQTDLLGD (355 aa). 10 helical membrane passes run 135–155, 160–180, 200–220, 234–254, 274–294, 305–325, 349–369, 384–404, 408–428, and 450–470; these read IFIP…IAAV, MVAG…FNVI, FGAT…TGIA, LQPG…LSIV, IALL…AGFV, IISI…LPLV, LLPI…ALWV, ALPV…TLPL, FLTA…IGHI, and LGYI…TYLF.

The protein resides in the cell membrane. The catalysed reaction is N-acetyl-beta-D-muramate-(1-&gt;4)-N-acetyl-D-glucosamine(out) + N(pros)-phospho-L-histidyl-[protein] = 6-phospho-N-acetyl-beta-D-muramate-(1-&gt;4)-N-acetyl-D-glucosamine(in) + L-histidyl-[protein]. Its pathway is cell wall biogenesis; peptidoglycan recycling. Its function is as follows. The phosphoenolpyruvate-dependent sugar phosphotransferase system (sugar PTS), a major carbohydrate active transport system, catalyzes the phosphorylation of incoming sugar substrates concomitantly with their translocation across the cell membrane. This system is involved in the uptake and phosphorylation of MurNAc-GlcNAc, the principle peptidoglycan turnover product of S.aureus, yielding cytoplasmic MurNAc 6P-GlcNAc. This is PTS system MurNAc-GlcNAc-specific EIIBC component from Staphylococcus aureus (strain bovine RF122 / ET3-1).